A 188-amino-acid polypeptide reads, in one-letter code: Elongation factor P (188 aa).

It belongs to the elongation factor P family.

The protein resides in the cytoplasm. Its pathway is protein biosynthesis; polypeptide chain elongation. In terms of biological role, involved in peptide bond synthesis. Stimulates efficient translation and peptide-bond synthesis on native or reconstituted 70S ribosomes in vitro. Probably functions indirectly by altering the affinity of the ribosome for aminoacyl-tRNA, thus increasing their reactivity as acceptors for peptidyl transferase. The polypeptide is Elongation factor P (Phytoplasma mali (strain AT)).